A 50-amino-acid chain; its full sequence is Protein hunchback (50 aa).

C2H2-type zinc fingers lie at residues 1–5 (HIRNH), 11–33 (FKCN…LKSH), and 39–50 (YRCADCAYATKY).

It belongs to the hunchback C2H2-type zinc-finger protein family.

Its subcellular location is the nucleus. Functionally, gap class segmentation protein that controls development of head structures. This Schultesia lampyridiformis (Firefly mimic roach) protein is Protein hunchback (hb).